The following is a 341-amino-acid chain: Probable galacturonosyltransferase-like 2 (341 aa).

The Cytoplasmic portion of the chain corresponds to 1 to 4 (MHSK). Residues 5 to 22 (FILYLSILAVFTVSFAGG) traverse the membrane as a helical; Signal-anchor for type II membrane protein segment. Residues 23-341 (ERFKEAPKFF…LESRFDLIES (319 aa)) lie on the Lumenal side of the membrane. A glycan (N-linked (GlcNAc...) asparagine) is linked at Asn-190.

It belongs to the glycosyltransferase 8 family.

It is found in the golgi apparatus membrane. It functions in the pathway glycan metabolism; pectin biosynthesis. May be involved in pectin and/or xylans biosynthesis in cell walls. This chain is Probable galacturonosyltransferase-like 2 (GATL2), found in Arabidopsis thaliana (Mouse-ear cress).